We begin with the raw amino-acid sequence, 156 residues long: Small ribosomal subunit protein uS7 (156 aa).

It belongs to the universal ribosomal protein uS7 family. Part of the 30S ribosomal subunit. Contacts proteins S9 and S11.

Its function is as follows. One of the primary rRNA binding proteins, it binds directly to 16S rRNA where it nucleates assembly of the head domain of the 30S subunit. Is located at the subunit interface close to the decoding center, probably blocks exit of the E-site tRNA. The sequence is that of Small ribosomal subunit protein uS7 from Thermomicrobium roseum (strain ATCC 27502 / DSM 5159 / P-2).